A 338-amino-acid chain; its full sequence is Galaxin (338 aa).

The signal sequence occupies residues 1–23; sequence MKPSGAFLSLCVVLLSLATHCFS. The span at 30-47 shows a compositional bias: basic and acidic residues; sequence RRDAHSDTNALKSRDRRQ. Positions 30–50 are disordered; it reads RRDAHSDTNALKSRDRRQAPA.

As to expression, component of the acid-insoluble organic matrix of the aragonitic skeleton (at protein level). Initially, expressed in an aboral submarginal ring and then along calcifying septa.

It localises to the secreted. This is Galaxin from Acropora millepora (Staghorn coral).